A 250-amino-acid polypeptide reads, in one-letter code: AA9 family lytic polysaccharide monooxygenase B (250 aa).

Residues 1 to 21 (MTLSKITSIAGLLASASLVAG) form the signal peptide. Residues His22 and His107 each coordinate Cu(2+). His22 is subject to Methylhistidine. 2 disulfide bridges follow: Cys77–Cys199 and Cys118–Cys122. N-linked (GlcNAc...) asparagine glycosylation is present at Asn159. O2 contacts are provided by His185 and Gln194. Cu(2+) is bound at residue Tyr196.

The protein belongs to the polysaccharide monooxygenase AA9 family. Cu(2+) serves as cofactor. The catalytically essential N-terminal histidine His-22 is post-translationally modified by methylation to prevent protonation of the histidine side chain, and protect the critical active site of the enzyme from oxidative damage.

It localises to the secreted. It catalyses the reaction [(1-&gt;4)-beta-D-glucosyl]n+m + reduced acceptor + O2 = 4-dehydro-beta-D-glucosyl-[(1-&gt;4)-beta-D-glucosyl]n-1 + [(1-&gt;4)-beta-D-glucosyl]m + acceptor + H2O.. Lytic polysaccharide monooxygenase (LPMO) that depolymerizes crystalline and amorphous polysaccharides via the oxidation of scissile alpha- or beta-(1-4)-glycosidic bonds, yielding C1 and C4 oxidation products. Catalysis by LPMOs requires the reduction of the active-site copper from Cu(II) to Cu(I) by a reducing agent and H(2)O(2) or O(2) as a cosubstrate. Shows activity on phosphoric acid swollen cellulose, on NaOH pretreated soy spent flakes as well as on crystalline cellulose (Avicel). Does not have a positive effect on cel6A activity, but acts synergistically with endoglucanase egl7. This is AA9 family lytic polysaccharide monooxygenase B from Aspergillus fumigatus (strain ATCC MYA-4609 / CBS 101355 / FGSC A1100 / Af293) (Neosartorya fumigata).